Reading from the N-terminus, the 122-residue chain is UPF0382 membrane protein SH2409 (122 aa).

Transmembrane regions (helical) follow at residues 3-23 (LFIILGALCTMMSVGTGAFGA), 46-66 (MYHGLGLIIIGVISGTTSINV), 69-89 (AGWLLFLGVVFFSGSLYILAL), and 98-118 (ITPIGGLLFIAGWLMLIISTF).

This sequence belongs to the UPF0382 family.

It is found in the cell membrane. This chain is UPF0382 membrane protein SH2409, found in Staphylococcus haemolyticus (strain JCSC1435).